The sequence spans 398 residues: Bifunctional enzyme IspD/IspF (398 aa).

A 2-C-methyl-D-erythritol 4-phosphate cytidylyltransferase region spans residues 1 to 234 (MSNSKRTAAI…SRLGALLGDI (234 aa)). Residues 235–398 (RTGTGYDVHA…LPWGTNGLAD (164 aa)) form a 2-C-methyl-D-erythritol 2,4-cyclodiphosphate synthase region. Residues Asp-241 and His-243 each contribute to the a divalent metal cation site. 4-CDP-2-C-methyl-D-erythritol 2-phosphate contacts are provided by residues 241–243 (DVH) and 267–268 (HS). His-275 contributes to the a divalent metal cation binding site. 4-CDP-2-C-methyl-D-erythritol 2-phosphate is bound by residues 289–291 (DIG), 365–368 (TTSE), Phe-372, and Arg-375.

This sequence in the N-terminal section; belongs to the IspD/TarI cytidylyltransferase family. IspD subfamily. The protein in the C-terminal section; belongs to the IspF family. A divalent metal cation serves as cofactor.

It catalyses the reaction 2-C-methyl-D-erythritol 4-phosphate + CTP + H(+) = 4-CDP-2-C-methyl-D-erythritol + diphosphate. The enzyme catalyses 4-CDP-2-C-methyl-D-erythritol 2-phosphate = 2-C-methyl-D-erythritol 2,4-cyclic diphosphate + CMP. Its pathway is isoprenoid biosynthesis; isopentenyl diphosphate biosynthesis via DXP pathway; isopentenyl diphosphate from 1-deoxy-D-xylulose 5-phosphate: step 2/6. It functions in the pathway isoprenoid biosynthesis; isopentenyl diphosphate biosynthesis via DXP pathway; isopentenyl diphosphate from 1-deoxy-D-xylulose 5-phosphate: step 4/6. Functionally, bifunctional enzyme that catalyzes the formation of 4-diphosphocytidyl-2-C-methyl-D-erythritol from CTP and 2-C-methyl-D-erythritol 4-phosphate (MEP) (IspD), and catalyzes the conversion of 4-diphosphocytidyl-2-C-methyl-D-erythritol 2-phosphate (CDP-ME2P) to 2-C-methyl-D-erythritol 2,4-cyclodiphosphate (ME-CPP) with a corresponding release of cytidine 5-monophosphate (CMP) (IspF). The chain is Bifunctional enzyme IspD/IspF from Rhodopseudomonas palustris (strain BisB18).